The sequence spans 118 residues: Protein TusC (118 aa).

It belongs to the DsrF/TusC family. In terms of assembly, heterohexamer, formed by a dimer of trimers. The hexameric TusBCD complex contains 2 copies each of TusB, TusC and TusD. The TusBCD complex interacts with TusE.

The protein resides in the cytoplasm. Part of a sulfur-relay system required for 2-thiolation of 5-methylaminomethyl-2-thiouridine (mnm(5)s(2)U) at tRNA wobble positions. The chain is Protein TusC from Salmonella arizonae (strain ATCC BAA-731 / CDC346-86 / RSK2980).